The chain runs to 216 residues: tRNA (guanine-N(7)-)-methyltransferase (216 aa).

S-adenosyl-L-methionine contacts are provided by glutamate 44, glutamate 69, asparagine 96, and aspartate 118. Aspartate 118 is a catalytic residue. Lysine 122 contributes to the substrate binding site. Positions 124–129 (RHEKRR) are interaction with RNA. Residues aspartate 154 and 191–194 (TEYE) contribute to the substrate site.

This sequence belongs to the class I-like SAM-binding methyltransferase superfamily. TrmB family.

The catalysed reaction is guanosine(46) in tRNA + S-adenosyl-L-methionine = N(7)-methylguanosine(46) in tRNA + S-adenosyl-L-homocysteine. Its pathway is tRNA modification; N(7)-methylguanine-tRNA biosynthesis. In terms of biological role, catalyzes the formation of N(7)-methylguanine at position 46 (m7G46) in tRNA. The sequence is that of tRNA (guanine-N(7)-)-methyltransferase from Geobacillus thermodenitrificans (strain NG80-2).